The primary structure comprises 414 residues: Gamma-glutamyl phosphate reductase (414 aa).

It belongs to the gamma-glutamyl phosphate reductase family.

It is found in the cytoplasm. The enzyme catalyses L-glutamate 5-semialdehyde + phosphate + NADP(+) = L-glutamyl 5-phosphate + NADPH + H(+). Its pathway is amino-acid biosynthesis; L-proline biosynthesis; L-glutamate 5-semialdehyde from L-glutamate: step 2/2. Functionally, catalyzes the NADPH-dependent reduction of L-glutamate 5-phosphate into L-glutamate 5-semialdehyde and phosphate. The product spontaneously undergoes cyclization to form 1-pyrroline-5-carboxylate. This chain is Gamma-glutamyl phosphate reductase, found in Clostridium beijerinckii (strain ATCC 51743 / NCIMB 8052) (Clostridium acetobutylicum).